The sequence spans 367 residues: Cytochrome b (367 aa).

Helical transmembrane passes span 25–45, 69–90, 105–125, and 170–190; these read FGSM…FLAI, WIMQ…YIHI, WLSG…GYVL, and FFAL…IHII. Heme b-binding residues include H75 and H89. Heme b contacts are provided by H174 and H188. An a ubiquinone-binding site is contributed by H193. A run of 4 helical transmembrane segments spans residues 218–238, 280–300, 312–332, and 339–358; these read YKDV…MSFT, LGGT…PFTH, LTQA…WTAT, and FIFI…IINP.

It belongs to the cytochrome b family. In terms of assembly, the cytochrome bc1 complex contains 3 respiratory subunits (MT-CYB, CYC1 and UQCRFS1), 2 core proteins (UQCRC1 and UQCRC2) and probably 6 low-molecular weight proteins. It depends on heme b as a cofactor.

The protein localises to the mitochondrion inner membrane. In terms of biological role, component of the ubiquinol-cytochrome c reductase complex (complex III or cytochrome b-c1 complex) that is part of the mitochondrial respiratory chain. The b-c1 complex mediates electron transfer from ubiquinol to cytochrome c. Contributes to the generation of a proton gradient across the mitochondrial membrane that is then used for ATP synthesis. The polypeptide is Cytochrome b (MT-CYB) (Austrelaps superbus (Lowland copperhead snake)).